The following is a 400-amino-acid chain: Argininosuccinate synthase (400 aa).

9 to 17 (AYSGGLDTS) is a binding site for ATP. Y87 is an L-citrulline binding site. G117 is a binding site for ATP. L-aspartate contacts are provided by T119, N123, and D124. N123 is an L-citrulline binding site. Residues R127, S176, S185, E261, and Y273 each contribute to the L-citrulline site.

The protein belongs to the argininosuccinate synthase family. Type 1 subfamily. Homotetramer.

It localises to the cytoplasm. The enzyme catalyses L-citrulline + L-aspartate + ATP = 2-(N(omega)-L-arginino)succinate + AMP + diphosphate + H(+). The protein operates within amino-acid biosynthesis; L-arginine biosynthesis; L-arginine from L-ornithine and carbamoyl phosphate: step 2/3. The chain is Argininosuccinate synthase from Chlorobium phaeobacteroides (strain DSM 266 / SMG 266 / 2430).